The primary structure comprises 775 residues: 1,4-alpha-glucan branching enzyme GlgB (775 aa).

The segment at 1–39 (MTSVHDFATATRPATPSAAAQEPAPALPPGLDRNTLDAL) is disordered. A compositionally biased stretch (low complexity) spans 8–24 (ATATRPATPSAAAQEPA). Asp-454 acts as the Nucleophile in catalysis. Glu-507 functions as the Proton donor in the catalytic mechanism.

This sequence belongs to the glycosyl hydrolase 13 family. GlgB subfamily. As to quaternary structure, monomer.

It carries out the reaction Transfers a segment of a (1-&gt;4)-alpha-D-glucan chain to a primary hydroxy group in a similar glucan chain.. The protein operates within glycan biosynthesis; glycogen biosynthesis. Catalyzes the formation of the alpha-1,6-glucosidic linkages in glycogen by scission of a 1,4-alpha-linked oligosaccharide from growing alpha-1,4-glucan chains and the subsequent attachment of the oligosaccharide to the alpha-1,6 position. The sequence is that of 1,4-alpha-glucan branching enzyme GlgB from Ralstonia nicotianae (strain ATCC BAA-1114 / GMI1000) (Ralstonia solanacearum).